The following is a 377-amino-acid chain: Protein RecA (377 aa).

Over residues 1-13 the composition is skewed to polar residues; it reads MSNEGKPLQSTES. A disordered region spans residues 1-20; it reads MSNEGKPLQSTESTKIDAKS. 82-89 is an ATP binding site; the sequence is GPESSGKT. Positions 346–377 are disordered; sequence GSEVSANSMRPLASAARQASSRPKLSQVSANG. The segment covering 362 to 377 has biased composition (polar residues); the sequence is RQASSRPKLSQVSANG.

This sequence belongs to the RecA family.

It localises to the cytoplasm. Can catalyze the hydrolysis of ATP in the presence of single-stranded DNA, the ATP-dependent uptake of single-stranded DNA by duplex DNA, and the ATP-dependent hybridization of homologous single-stranded DNAs. It interacts with LexA causing its activation and leading to its autocatalytic cleavage. The chain is Protein RecA from Prochlorococcus marinus (strain NATL1A).